The sequence spans 125 residues: DNA-directed RNA polymerase II subunit RPB9 (125 aa).

The residue at position 1 (Met-1) is an N-acetylmethionine. Zn(2+)-binding residues include Cys-17, Cys-20, Cys-39, Cys-42, Cys-86, Cys-89, Cys-114, and Cys-119. Residues 17 to 42 form a C4-type zinc finger; that stretch reads CQECNNMLYPKEDKENRILLYACRNC. The TFIIS-type zinc-finger motif lies at 82-124; that stretch reads EDHPCQKCGHKEAVFFQSHSARAEDAMRLYYVCTAPHCGHRWT.

The protein belongs to the archaeal RpoM/eukaryotic RPA12/RPB9/RPC11 RNA polymerase family. Component of the RNA polymerase II (Pol II) core complex consisting of 12 subunits: a ten-subunit catalytic core composed of POLR2A/RPB1, POLR2B/RPB2, POLR2C/RPB3, POLR2I/RPB9, POLR2J/RPB11, POLR2E/RPABC1, POLR2F/RPABC2, POLR2H/RPABC3, POLR2K/RPABC4 and POLR2L/RPABC5 and a mobile stalk composed of two subunits POLR2D/RPB4 and POLR2G/RPB7, protruding from the core and functioning primarily in transcription initiation. Part of Pol II(G) complex, in which Pol II core associates with an additional subunit POLR2M; unlike conventional Pol II, Pol II(G) functions as a transcriptional repressor. Part of TBP-based Pol II pre-initiation complex (PIC), in which Pol II core assembles with general transcription factors and other specific initiation factors including GTF2E1, GTF2E2, GTF2F1, GTF2F2, TCEA1, ERCC2, ERCC3, GTF2H2, GTF2H3, GTF2H4, GTF2H5, GTF2A1, GTF2A2, GTF2B and TBP; this large multi-subunit PIC complex mediates DNA unwinding and targets Pol II core to the transcription start site where the first phosphodiester bond forms.

It localises to the nucleus. The protein localises to the nucleolus. In terms of biological role, DNA-dependent RNA polymerase catalyzes the transcription of DNA into RNA using the four ribonucleoside triphosphates as substrates. Component of RNA polymerase II which synthesizes mRNA precursors and many functional non-coding RNAs. Pol II is the central component of the basal RNA polymerase II transcription machinery. It is composed of mobile elements that move relative to each other. POLR2I/RPB9 is part of the upper jaw surrounding the central large cleft and thought to grab the incoming DNA template. In Bos taurus (Bovine), this protein is DNA-directed RNA polymerase II subunit RPB9 (POLR2I).